The primary structure comprises 329 residues: Alpha/beta hydrolase domain-containing protein 17C (329 aa).

Residues 46 to 85 (APEQRGPGAPAPASAASTSSASAAAQPAPQQPEEGGAGPG) are disordered. Residues 51-79 (GPGAPAPASAASTSSASAAAQPAPQQPEE) show a composition bias toward low complexity. Residues serine 211, aspartate 276, and histidine 305 each act as charge relay system in the active site.

It belongs to the AB hydrolase superfamily. ABHD17 family. Post-translationally, palmitoylated on cysteine residues located in a cysteine cluster at the N-terminus which promotes membrane localization. Palmitoylation is required for post-synaptic localization and for depalmitoylating activity towards DLG4/PSD95.

It localises to the recycling endosome membrane. The protein resides in the cell projection. Its subcellular location is the dendritic spine. It is found in the postsynaptic density membrane. It carries out the reaction S-hexadecanoyl-L-cysteinyl-[protein] + H2O = L-cysteinyl-[protein] + hexadecanoate + H(+). Functionally, hydrolyzes fatty acids from S-acylated cysteine residues in proteins. Has depalmitoylating activity towards NRAS and DLG4/PSD95. This Bos taurus (Bovine) protein is Alpha/beta hydrolase domain-containing protein 17C.